The following is a 55-amino-acid chain: UPF0291 protein CA_C2726 (55 aa).

Belongs to the UPF0291 family.

It is found in the cytoplasm. The polypeptide is UPF0291 protein CA_C2726 (Clostridium acetobutylicum (strain ATCC 824 / DSM 792 / JCM 1419 / IAM 19013 / LMG 5710 / NBRC 13948 / NRRL B-527 / VKM B-1787 / 2291 / W)).